A 577-amino-acid polypeptide reads, in one-letter code: Methionine--tRNA ligase, mitochondrial (577 aa).

The 'HIGH' region signature appears at 25 to 37 (PIFYVNAAPHIGH). The 'KMSKS' region motif lies at 329-333 (KMSKS). Lysine 332 is a binding site for ATP.

This sequence belongs to the class-I aminoacyl-tRNA synthetase family.

The protein resides in the mitochondrion matrix. The catalysed reaction is tRNA(Met) + L-methionine + ATP = L-methionyl-tRNA(Met) + AMP + diphosphate. This chain is Methionine--tRNA ligase, mitochondrial (MSM1), found in Candida albicans (Yeast).